Here is a 158-residue protein sequence, read N- to C-terminus: Cyclic pyranopterin monophosphate synthase (158 aa).

Residues 73–75 and 110–111 contribute to the substrate site; these read LCH and ME. The active site involves Asp125.

This sequence belongs to the MoaC family. In terms of assembly, homohexamer; trimer of dimers.

It carries out the reaction (8S)-3',8-cyclo-7,8-dihydroguanosine 5'-triphosphate = cyclic pyranopterin phosphate + diphosphate. It functions in the pathway cofactor biosynthesis; molybdopterin biosynthesis. Catalyzes the conversion of (8S)-3',8-cyclo-7,8-dihydroguanosine 5'-triphosphate to cyclic pyranopterin monophosphate (cPMP). This is Cyclic pyranopterin monophosphate synthase from Azotobacter vinelandii (strain DJ / ATCC BAA-1303).